The sequence spans 119 residues: Large ribosomal subunit protein uL22c (119 aa).

It belongs to the universal ribosomal protein uL22 family. In terms of assembly, part of the 50S ribosomal subunit.

The protein resides in the plastid. The protein localises to the chloroplast. Functionally, this protein binds specifically to 23S rRNA. Its function is as follows. The globular domain of the protein is located near the polypeptide exit tunnel on the outside of the subunit, while an extended beta-hairpin is found that lines the wall of the exit tunnel in the center of the 70S ribosome. In Spirogyra maxima (Green alga), this protein is Large ribosomal subunit protein uL22c (rpl22).